Reading from the N-terminus, the 228-residue chain is L-ribulose-5-phosphate 4-epimerase UlaF (228 aa).

Residues 26 to 27 (GN), 43 to 44 (SG), and 72 to 73 (SS) contribute to the substrate site. Positions 74, 93, and 95 each coordinate Zn(2+). The active-site Proton donor/acceptor is the Asp-118. His-167 contributes to the Zn(2+) binding site. The active-site Proton donor/acceptor is the Tyr-225.

Belongs to the aldolase class II family. AraD/FucA subfamily. Zn(2+) serves as cofactor.

The catalysed reaction is L-ribulose 5-phosphate = D-xylulose 5-phosphate. Its pathway is cofactor degradation; L-ascorbate degradation; D-xylulose 5-phosphate from L-ascorbate: step 4/4. Functionally, catalyzes the isomerization of L-ribulose 5-phosphate to D-xylulose 5-phosphate. Is involved in the anaerobic L-ascorbate utilization. The chain is L-ribulose-5-phosphate 4-epimerase UlaF from Escherichia coli O139:H28 (strain E24377A / ETEC).